The sequence spans 211 residues: Protein GrpE (211 aa).

Residues 1–43 are disordered; the sequence is MTDETTKNGPDATAADAAADAAANVEIDNSVQEEAKQPDPLEL. Over residues 11-23 the composition is skewed to low complexity; sequence DATAADAAADAAA. The span at 33 to 43 shows a compositional bias: basic and acidic residues; that stretch reads EEAKQPDPLEL.

Belongs to the GrpE family. In terms of assembly, homodimer.

It localises to the cytoplasm. Participates actively in the response to hyperosmotic and heat shock by preventing the aggregation of stress-denatured proteins, in association with DnaK and GrpE. It is the nucleotide exchange factor for DnaK and may function as a thermosensor. Unfolded proteins bind initially to DnaJ; upon interaction with the DnaJ-bound protein, DnaK hydrolyzes its bound ATP, resulting in the formation of a stable complex. GrpE releases ADP from DnaK; ATP binding to DnaK triggers the release of the substrate protein, thus completing the reaction cycle. Several rounds of ATP-dependent interactions between DnaJ, DnaK and GrpE are required for fully efficient folding. The chain is Protein GrpE from Rhizobium etli (strain ATCC 51251 / DSM 11541 / JCM 21823 / NBRC 15573 / CFN 42).